The primary structure comprises 173 residues: Bifunctional protein PyrR (173 aa).

Residues 93-105 (VILVDDVLYTGRT) carry the PRPP-binding motif.

It belongs to the purine/pyrimidine phosphoribosyltransferase family. PyrR subfamily. Homodimer and homohexamer; in equilibrium.

The catalysed reaction is UMP + diphosphate = 5-phospho-alpha-D-ribose 1-diphosphate + uracil. Regulates transcriptional attenuation of the pyrimidine nucleotide (pyr) operon by binding in a uridine-dependent manner to specific sites on pyr mRNA. This disrupts an antiterminator hairpin in the RNA and favors formation of a downstream transcription terminator, leading to a reduced expression of downstream genes. Functionally, also displays a weak uracil phosphoribosyltransferase activity which is not physiologically significant. The chain is Bifunctional protein PyrR from Streptococcus suis (strain 05ZYH33).